An 873-amino-acid chain; its full sequence is Serine/threonine-protein phosphatase 4 regulatory subunit 4 (873 aa).

HEAT repeat units lie at residues 213-251, 252-290, and 392-427; these read ILPL…TKSV, VLPE…RSQT, and NFHM…SKLL. Positions 686-720 form a coiled coil; sequence QKKFYEKDLLDQEKEREELLLLEMEQLEKEKQQND. Over residues 713-737 the composition is skewed to basic and acidic residues; the sequence is EKEKQQNDGRPMSDKMFEKKRRDTK. Positions 713 to 766 are disordered; it reads EKEKQQNDGRPMSDKMFEKKRRDTKTPTQSLPKNIPISVPGPSSVTPSTSKEIK. Residues 747 to 762 show a composition bias toward low complexity; that stretch reads IPISVPGPSSVTPSTS. The residue at position 775 (Ser775) is a Phosphoserine. At Thr797 the chain carries Phosphothreonine. The segment covering 822-858 has biased composition (polar residues); that stretch reads TRNASSVPSSFSPNTPLPSTSRGTGNSVDPKSSGSKD. The segment at 822 to 873 is disordered; sequence TRNASSVPSSFSPNTPLPSTSRGTGNSVDPKSSGSKDTQPRKATLKSRKSNP. The span at 864 to 873 shows a compositional bias: basic residues; the sequence is ATLKSRKSNP.

Serine/threonine-protein phosphatase 4 (PP4) occurs in different assemblies of the catalytic and one or more regulatory subunits. Component of the PP4 complex PPP4C-PPP4R4.

Its subcellular location is the cytoplasm. In terms of biological role, putative regulatory subunit of serine/threonine-protein phosphatase 4. The chain is Serine/threonine-protein phosphatase 4 regulatory subunit 4 (PPP4R4) from Homo sapiens (Human).